The following is a 297-amino-acid chain: CASP-like protein 2U8 (297 aa).

The Cytoplasmic segment spans residues 1-10 (MLELYEKRRA). The chain crosses the membrane as a helical span at residues 11–31 (LLLLRLAAMFLSLAALLITVL). Topologically, residues 32–64 (NREDGFFSINVFGSPQPILAKATADFTLVKGLK) are extracellular. A helical transmembrane segment spans residues 65 to 85 (FFAGAMGIVAGYSFLQLAIAM). Topologically, residues 86-101 (ASIFSGAPSILGGKRM) are cytoplasmic. A helical membrane pass occupies residues 102–122 (AWLCFVGDMTASHLCAAAAAV). The Extracellular portion of the chain corresponds to 123–148 (SAQLAYLGKRGAPMWSAVCTYFSHYC). A helical transmembrane segment spans residues 149 to 169 (LVFGLAVILAFLATLAALLVA). Residues 170–297 (SISSYHLAYD…RVLEMETPCK (128 aa)) are Cytoplasmic-facing.

This sequence belongs to the Casparian strip membrane proteins (CASP) family. In terms of assembly, homodimer and heterodimers.

The protein localises to the cell membrane. The sequence is that of CASP-like protein 2U8 from Selaginella moellendorffii (Spikemoss).